The primary structure comprises 202 residues: MALLWALAVLSHLPLLDAQSPECANLMTVAPITNATMDLLSGKWFYIGSAFRNPEYNKSARAIQAAFFYLEPRHAEDKLITREYQTIEDKCVYNCSFIKIYRQNGTLSKVESDREHFVDLLLSKHFRTFMLAASWNGTKNVGVSFYADKPEVTQEQKKEFLDVIKCIGIQESEIIYTDEKKDACGPLEKQHEEERKKETEAS.

An N-terminal signal peptide occupies residues 1–18; sequence MALLWALAVLSHLPLLDA. N-linked (GlcNAc...) asparagine glycans are attached at residues Asn-34, Asn-57, Asn-94, Asn-104, and Asn-136. An intrachain disulfide couples Cys-91 to Cys-184.

The protein belongs to the calycin superfamily. Lipocalin family.

It localises to the secreted. Functionally, functions as a transport protein in the blood stream. Binds various ligands in the interior of its beta-barrel domain. Appears to function in modulating the activity of the immune system during the acute-phase reaction. This chain is Alpha-1-acid glycoprotein (ORM1), found in Bos taurus (Bovine).